The chain runs to 466 residues: Argininosuccinate lyase (466 aa).

Belongs to the lyase 1 family. Argininosuccinate lyase subfamily.

It localises to the cytoplasm. The catalysed reaction is 2-(N(omega)-L-arginino)succinate = fumarate + L-arginine. The protein operates within amino-acid biosynthesis; L-arginine biosynthesis; L-arginine from L-ornithine and carbamoyl phosphate: step 3/3. This Microcystis aeruginosa (strain NIES-843 / IAM M-2473) protein is Argininosuccinate lyase.